The sequence spans 69 residues: Neurotoxin Cex3 (69 aa).

A signal peptide is located at residue alanine 1. The region spanning lysine 2–glycine 67 is the LCN-type CS-alpha/beta domain. 4 cysteine pairs are disulfide-bonded: cysteine 13/cysteine 66, cysteine 17/cysteine 42, cysteine 26/cysteine 47, and cysteine 30/cysteine 49. The residue at position 66 (cysteine 66) is a Cysteine amide. A propeptide spanning residues glycine 67–lysine 69 is cleaved from the precursor.

The protein belongs to the long (4 C-C) scorpion toxin superfamily. Sodium channel inhibitor family. Beta subfamily. As to expression, expressed by the venom gland.

The protein localises to the secreted. Its function is as follows. Beta toxins bind voltage-independently at site-4 of sodium channels (Nav) and shift the voltage of activation toward more negative potentials thereby affecting sodium channel activation and promoting spontaneous and repetitive firing. This is Neurotoxin Cex3 from Centruroides exilicauda (Bark scorpion).